Reading from the N-terminus, the 961-residue chain is DNA replication licensing factor MCM2 (961 aa).

Positions 1 to 17 (MDDSENNAPSTPGSPGF) are enriched in polar residues. Disordered stretches follow at residues 1–81 (MDDS…FNDN) and 120–220 (AEAE…EEDE). The span at 39–78 (SDDDDDDVVGAEEAEVDPNVLPEDDGVVAAEEEEDGEDLF) shows a compositional bias: acidic residues. Composition is skewed to basic and acidic residues over residues 120–146 (AEAELDARDVRTGAAPDRKLPRMLHDQ) and 166–176 (PPREPRTPRSD). Acidic residues predominate over residues 205 to 220 (QTDDDPYEDEFDEEDE). The C4-type zinc finger occupies 380-406 (CSKCGTVLGPFFQNSYTEVKVGSCPEC). Positions 524–730 (IGERIVKSIA…FTDEMLARFV (207 aa)) constitute an MCM domain. 574 to 581 (GDPGTAKS) is an ATP binding site. The short motif at 706 to 709 (SRFD) is the Arginine finger element.

The protein belongs to the MCM family. Component of the minichromosome maintenance (MCM) complex, a heterotetramer composed of MCM2, MCM3, MCM4, MCM5, MCM6 and MCM7. Interacts with CSN5. In terms of tissue distribution, widely expressed, with higher expression in developing tissues.

It is found in the nucleus. The catalysed reaction is ATP + H2O = ADP + phosphate + H(+). Probable component of the MCM2-7 complex (MCM complex) that may function as a DNA helicase and which is essential to undergo a single round of replication initiation and elongation per cell cycle in eukaryotic cells. Can complement the fission yeast mcm2 mutant. In Oryza sativa subsp. japonica (Rice), this protein is DNA replication licensing factor MCM2.